The primary structure comprises 76 residues: uncharacterized protein (76 aa).

The protein resides in the host cytoplasm. This is an uncharacterized protein from Escherichia phage Mu (Bacteriophage Mu).